A 1027-amino-acid polypeptide reads, in one-letter code: Translation initiation factor IF-2 (1027 aa).

Residues 31–433 form a disordered region; the sequence is YVKSASSTVE…GGVRLPRGNG (403 aa). Residues 57 to 68 are compositionally biased toward gly residues; that stretch reads KKGGGDSNGRAG. Residues 110–122 show a composition bias toward pro residues; it reads GPKPGPKPGPKAP. Positions 123 to 145 are enriched in low complexity; that stretch reads APETKPFEEAPAPAAKADAPAQP. The segment covering 148 to 171 has biased composition (basic and acidic residues); the sequence is EQPRSEQPRSEQPRSEQPRSERSG. Composition is skewed to pro residues over residues 174–188 and 201–212; these read PGGPKPGPKPGPKPG and PPKPQSPKPGPR. The segment covering 237 to 268 has biased composition (gly residues); the sequence is PGGGQRQGGQGPGRGGPQGGRPDRQGGGGQGA. The span at 293–302 shows a compositional bias: pro residues; it reads GMMPPRPNPG. Positions 311-397 are enriched in gly residues; that stretch reads SGGGPGGGRG…GAAGAFGRPG (87 aa). Residues 401-410 are compositionally biased toward basic residues; sequence RRGRKSKRQK. The tr-type G domain occupies 523–695; that stretch reads SRPPVVTVMG…ILLTADATLD (173 aa). The G1 stretch occupies residues 532-539; that stretch reads GHVDHGKT. Position 532-539 (532-539) interacts with GTP; the sequence is GHVDHGKT. The G2 stretch occupies residues 557 to 561; the sequence is GITQH. The G3 stretch occupies residues 582-585; sequence DTPG. Residues 582-586 and 636-639 each bind GTP; these read DTPGH and NKID. The G4 stretch occupies residues 636–639; sequence NKID. The segment at 672-674 is G5; the sequence is SAR.

This sequence belongs to the TRAFAC class translation factor GTPase superfamily. Classic translation factor GTPase family. IF-2 subfamily.

The protein localises to the cytoplasm. In terms of biological role, one of the essential components for the initiation of protein synthesis. Protects formylmethionyl-tRNA from spontaneous hydrolysis and promotes its binding to the 30S ribosomal subunits. Also involved in the hydrolysis of GTP during the formation of the 70S ribosomal complex. The polypeptide is Translation initiation factor IF-2 (Saccharopolyspora erythraea (strain ATCC 11635 / DSM 40517 / JCM 4748 / NBRC 13426 / NCIMB 8594 / NRRL 2338)).